The sequence spans 289 residues: Bifunctional protein FolD (289 aa).

NADP(+) is bound by residues 165–167 (GAS) and serine 190.

Belongs to the tetrahydrofolate dehydrogenase/cyclohydrolase family. In terms of assembly, homodimer.

The enzyme catalyses (6R)-5,10-methylene-5,6,7,8-tetrahydrofolate + NADP(+) = (6R)-5,10-methenyltetrahydrofolate + NADPH. It catalyses the reaction (6R)-5,10-methenyltetrahydrofolate + H2O = (6R)-10-formyltetrahydrofolate + H(+). It functions in the pathway one-carbon metabolism; tetrahydrofolate interconversion. In terms of biological role, catalyzes the oxidation of 5,10-methylenetetrahydrofolate to 5,10-methenyltetrahydrofolate and then the hydrolysis of 5,10-methenyltetrahydrofolate to 10-formyltetrahydrofolate. This is Bifunctional protein FolD from Ralstonia pickettii (strain 12J).